Here is a 94-residue protein sequence, read N- to C-terminus: Putative testis-specific prion protein (94 aa).

Positions 1-18 are cleaved as a signal peptide; it reads MQHSLVFFFAVILHLSHL. Residue Asn44 is glycosylated (N-linked (GlcNAc...) asparagine).

Specifically expressed in adult testis.

Its subcellular location is the secreted. In Homo sapiens (Human), this protein is Putative testis-specific prion protein (PRNT).